The following is a 185-amino-acid chain: Serine/arginine-rich splicing factor RSZ21 (185 aa).

The RRM domain occupies 2-73 (ARLYVGNLDP…WRVELSRNSS (72 aa)). Residues 86–103 (MKCYECGETGHFARECRL) form a CCHC-type zinc finger. The segment at 104–185 (RIGPGGLGSG…DGGRYRRSRS (82 aa)) is disordered. The segment covering 113 to 123 (GKRRSRSRSRS) has biased composition (basic residues). Low complexity-rich tracts occupy residues 124 to 138 (RSPQYRKSPTYGRRS) and 151 to 162 (VSPVRGRSYSRS).

This sequence belongs to the splicing factor SR family. Extensively phosphorylated on serine residues in the RS domain. Expressed in roots, leaves and immature seeds.

It localises to the nucleus. Functionally, involved in pre-mRNA splicing. In Oryza sativa subsp. japonica (Rice), this protein is Serine/arginine-rich splicing factor RSZ21 (RSZP21).